The sequence spans 138 residues: ATP synthase epsilon chain (138 aa).

The protein belongs to the ATPase epsilon chain family. In terms of assembly, F-type ATPases have 2 components, CF(1) - the catalytic core - and CF(0) - the membrane proton channel. CF(1) has five subunits: alpha(3), beta(3), gamma(1), delta(1), epsilon(1). CF(0) has three main subunits: a, b and c.

It is found in the cell inner membrane. Functionally, produces ATP from ADP in the presence of a proton gradient across the membrane. The polypeptide is ATP synthase epsilon chain (Cupriavidus metallidurans (strain ATCC 43123 / DSM 2839 / NBRC 102507 / CH34) (Ralstonia metallidurans)).